A 309-amino-acid chain; its full sequence is uncharacterized protein (309 aa).

A helical membrane pass occupies residues 23 to 43 (ALVLSSIVNILLLLLIYSTVF).

The protein belongs to the chlamydial CPn_0593/CT_474/TC_0759 family.

The protein resides in the membrane. This is an uncharacterized protein from Chlamydia trachomatis serovar D (strain ATCC VR-885 / DSM 19411 / UW-3/Cx).